Consider the following 329-residue polypeptide: MTRTGDAVTILPQPDFTATFPGPFPTSPHGERTERQLLGWLEEYPLLPSARARSVLVNITSHGVSRTLPTADADDLVLFAELLLWLTAFDDMHGESNAARDLVALVDRTAELTLVLAGGSPPPLTNPFPAALYDLLARFRARTGPAAYLRLAASLRDTIMALVWEAHHVAEPERVALETYLEMRPHTVFVRTIFAAAEIVLDYELTDAQRALAPVRHLETAVANLAGWINDLASYEREAARGPAQPLSLPTLLRARHGGSLEEAFARAGGMCENEAAVARQGITSLAGDPPSALTAHARALEDIARSFVWHTSHARYQGPKRGAAPTSR.

Positions 90 and 95 each coordinate Mg(2+). Positions 90 to 95 match the DDXXXE motif motif; sequence DDMHGE. Substrate is bound at residue arginine 184. Mg(2+) contacts are provided by asparagine 230 and serine 234. An NXXXSXXXE motif motif is present at residues 230 to 238; it reads NDLASYERE. Arginine 237 contacts substrate. Glutamate 238 is a binding site for Mg(2+). A substrate-binding site is contributed by 316 to 317; the sequence is RY.

It belongs to the terpene synthase family. Mg(2+) serves as cofactor.

It catalyses the reaction (+)-copalyl diphosphate = (12E)-labda-8(17),12,14-triene + diphosphate. Its function is as follows. Involved in the biosynthesis of the mercapturic acid derivative diterpene cyslabdan A, a potentiator of the beta-lactam antibiotic imipenem. Catalyzes the conversion of (+)-copalyl diphosphate to yield labda-8(17),12(E),14-triene (biformene). The polypeptide is (12E)-labda-8(17),12,14-triene synthase (Streptomyces cyslabdanicus).